Reading from the N-terminus, the 423-residue chain is UPF0597 protein Emin_0811 (423 aa).

Belongs to the UPF0597 family.

The chain is UPF0597 protein Emin_0811 from Elusimicrobium minutum (strain Pei191).